The chain runs to 291 residues: Undecaprenyl-diphosphatase (291 aa).

Transmembrane regions (helical) follow at residues 1-21, 48-68, 102-122, 126-146, 162-182, 203-223, 231-251, and 267-287; these read MFIIELIKGIILGVVEGLTEF, SAFTFKIVIQLGSVFAAAWVF, LHVLVGMVPAGILGLLFDDFI, LFSVPTVMIGLFVGAIYMIIA, ISYFQAFVIGISQAVAMWPGF, SDFTFIMAVPIMLAASGLSLL, IADIPFYILGFLAAFTVGLIA, and FAIYRIVLVIFIAILYFGFGI.

The protein belongs to the UppP family.

The protein localises to the cell membrane. The enzyme catalyses di-trans,octa-cis-undecaprenyl diphosphate + H2O = di-trans,octa-cis-undecaprenyl phosphate + phosphate + H(+). Its function is as follows. Catalyzes the dephosphorylation of undecaprenyl diphosphate (UPP). Confers resistance to bacitracin. The chain is Undecaprenyl-diphosphatase from Staphylococcus aureus (strain USA300).